Here is a 207-residue protein sequence, read N- to C-terminus: Large ribosomal subunit protein bL25 (207 aa).

The segment at 171 to 207 is disordered; the sequence is ESVVTVEVPEDATESTTAPEAAAAPADAAAAPAADAK. Positions 184 to 207 are enriched in low complexity; it reads ESTTAPEAAAAPADAAAAPAADAK.

The protein belongs to the bacterial ribosomal protein bL25 family. CTC subfamily. Part of the 50S ribosomal subunit; part of the 5S rRNA/L5/L18/L25 subcomplex. Contacts the 5S rRNA. Binds to the 5S rRNA independently of L5 and L18.

Its function is as follows. This is one of the proteins that binds to the 5S RNA in the ribosome where it forms part of the central protuberance. The protein is Large ribosomal subunit protein bL25 of Bifidobacterium longum subsp. infantis (strain ATCC 15697 / DSM 20088 / JCM 1222 / NCTC 11817 / S12).